A 310-amino-acid chain; its full sequence is Altered inheritance of mitochondria protein 46, mitochondrial (310 aa).

A mitochondrion-targeting transit peptide spans 1 to 20; the sequence is MRLISKVLVKTNCLEVGMRR.

This sequence belongs to the AIM18/AIM46 family.

The protein resides in the mitochondrion. The chain is Altered inheritance of mitochondria protein 46, mitochondrial (AIM46) from Saccharomyces cerevisiae (strain YJM789) (Baker's yeast).